The sequence spans 554 residues: Thermosome subunit alpha (554 aa).

Residues 530–554 are disordered; it reads PKKKEKKGKTGEEEEEEGGGSKFEF.

This sequence belongs to the TCP-1 chaperonin family. As to quaternary structure, forms a Heterooligomeric complex of two stacked eight-membered rings.

Molecular chaperone; binds unfolded polypeptides in vitro, and has a weak ATPase activity. The protein is Thermosome subunit alpha (thsA) of Aeropyrum pernix (strain ATCC 700893 / DSM 11879 / JCM 9820 / NBRC 100138 / K1).